Reading from the N-terminus, the 152-residue chain is MKIESTRFGTLDVAPEQIIHFPHGIPGFLGEKAFVHLPHDENSPFSFLQSTAEADLSFLLIDPFSFIPEYEFVLSDEMAGELELSEENPPQVFLIGTVREKITDMTVNLLAPIVVNRNKSIGRQIILDKTEYSIRHKLFSEAKASETPEGGK.

This sequence belongs to the FliW family. In terms of assembly, interacts with translational regulator CsrA and flagellin(s).

It localises to the cytoplasm. Its function is as follows. Acts as an anti-CsrA protein, binds CsrA and prevents it from repressing translation of its target genes, one of which is flagellin. Binds to flagellin and participates in the assembly of the flagellum. The polypeptide is Flagellar assembly factor FliW (Desulfitobacterium hafniense (strain Y51)).